We begin with the raw amino-acid sequence, 150 residues long: Large ribosomal subunit protein bL9 (150 aa).

This sequence belongs to the bacterial ribosomal protein bL9 family.

Functionally, binds to the 23S rRNA. This Shewanella pealeana (strain ATCC 700345 / ANG-SQ1) protein is Large ribosomal subunit protein bL9.